The sequence spans 86 residues: High affinity immunoglobulin epsilon receptor subunit gamma (86 aa).

An N-terminal signal peptide occupies residues 1 to 18 (MIPAVILFLLLLVEEAAA). Over 19–23 (LGEPQ) the chain is Extracellular. Residues 24-44 (LCYILDAILFLYGIVLTLLYC) traverse the membrane as a helical segment. Residues 45–86 (RLKIQVRKADIASREKSDAVYTGLNTRNQETYETLKHEKPPQ) lie on the Cytoplasmic side of the membrane. In terms of domain architecture, ITAM spans 54 to 82 (DIASREKSDAVYTGLNTRNQETYETLKHE). 2 positions are modified to phosphotyrosine: Tyr-65 and Tyr-76. Thr-78 bears the Phosphothreonine mark.

The protein belongs to the CD3Z/FCER1G family. As to quaternary structure, igE Fc receptor is a tetramer of an alpha chain, a beta chain, and two disulfide linked gamma chains. Associates with FCGR1A to form a functional receptor complex. The signaling subunit of immunoglobulin gamma (IgG) Fc receptor complex. As a homodimer or a heterodimer of CD247 and FCER1G, associates with the ligand binding subunit FCGR3A to form a functional receptor complex. Associates with CLEC6A. Interacts with CLEC4E. Interacts (via ITAM domain) with SYK (via SH2 domains); activates SYK, enabling integrin-mediated activation of neutrophils and macrophages. Interacts with common beta chain of interleukin 3 receptor CSF2RB and recruits SYK in response to IL3 stimulation; this interaction is direct. Interacts with CD300LH; the interaction may be indirect. Interacts with CD300LD. Interacts with TARM1. As to expression, expressed in leukocytes and pinealocytes. Expression in the pineal gland does not undergo circadian variations.

The protein localises to the cell membrane. Functionally, adapter protein containing an immunoreceptor tyrosine-based activation motif (ITAM) that transduces activation signals from various immunoreceptors. As a component of the high-affinity immunoglobulin E (IgE) receptor, mediates allergic inflammatory signaling in mast cells. As a constitutive component of interleukin-3 receptor complex, selectively mediates interleukin 4/IL4 production by basophils priming T-cells toward effector T-helper 2 subset. Associates with pattern recognition receptors CLEC4D and CLEC4E to form a functional signaling complex in myeloid cells. Binding of mycobacterial trehalose 6,6'-dimycolate (TDM) to this receptor complex leads to phosphorylation of ITAM, triggering activation of SYK, CARD9 and NF-kappa-B, consequently driving maturation of antigen-presenting cells and shaping antigen-specific priming of T-cells toward effector T-helper 1 and T-helper 17 cell subtypes. May function cooperatively with other activating receptors. Functionally linked to integrin beta-2/ITGB2-mediated neutrophil activation. Also involved in integrin alpha-2/ITGA2-mediated platelet activation. The chain is High affinity immunoglobulin epsilon receptor subunit gamma (Fcer1g) from Rattus norvegicus (Rat).